The following is a 282-amino-acid chain: HTH-type transcriptional activator RhaR (282 aa).

The HTH araC/xylS-type domain maps to 179–277 (DKLITRLAAS…GMTPSQWRHL (99 aa)). 2 DNA-binding regions (H-T-H motif) span residues 196 to 217 (DKFC…RQQT) and 244 to 267 (ISDI…TRET).

In terms of assembly, binds DNA as a dimer.

The protein localises to the cytoplasm. In terms of biological role, activates expression of the rhaSR operon in response to L-rhamnose. This is HTH-type transcriptional activator RhaR from Shigella flexneri serotype 5b (strain 8401).